A 469-amino-acid chain; its full sequence is Acetyl-CoA decarbonylase/synthase complex subunit beta 1 (469 aa).

4 residues coordinate [Ni-Fe-S] cluster: Cys-189, Cys-192, Cys-278, and Cys-280.

This sequence belongs to the CdhC family. In terms of assembly, monomer. The ACDS complex is made up of alpha, epsilon, beta, gamma and delta chains with a probable stoichiometry of (alpha(2)epsilon(2))(4)-beta(8)-(gamma(1)delta(1))(8) (Potential). The cofactor is [Ni-Fe-S] cluster.

It catalyses the reaction Co(I)-[corrinoid Fe-S protein] + acetyl-CoA + H(+) = methyl-Co(III)-[corrinoid Fe-S protein] + CO + CoA. It functions in the pathway one-carbon metabolism; methanogenesis from acetate. Its function is as follows. Part of a complex that catalyzes the reversible cleavage of acetyl-CoA, allowing growth on acetate as sole source of carbon and energy. The alpha-epsilon complex generates CO from CO(2), while the beta subunit (this protein) combines the CO with CoA and a methyl group to form acetyl-CoA. The methyl group, which is incorporated into acetyl-CoA, is transferred to the beta subunit by a corrinoid iron-sulfur protein (the gamma-delta complex). This Methanosarcina acetivorans (strain ATCC 35395 / DSM 2834 / JCM 12185 / C2A) protein is Acetyl-CoA decarbonylase/synthase complex subunit beta 1 (cdhC1).